Consider the following 455-residue polypeptide: N-acetyl-S-(2-succino)cysteine lyase (455 aa).

Position 106 to 107 (106 to 107 (TT)) interacts with fumarate. The active-site Proton donor/acceptor is H154. R233 is a fumarate binding site. The Proton donor/acceptor role is filled by S277. Fumarate is bound by residues S278 and 283–285 (KRN).

The protein belongs to the lyase 1 family.

The enzyme catalyses N-acetyl-S-(2-succino)-L-cysteine = N-acetyl-L-cysteine + fumarate. It participates in amino-acid biosynthesis; L-cysteine biosynthesis. Functionally, catalyzes the cleavage of N-acetyl-S-(2-succino)cysteine into fumarate and N-acetylcysteine. Is involved in a S-(2-succino)cysteine (2SC) degradation pathway that allows the bacterium to recover cysteine from 2SC and to detoxify 2SC that may be a toxic metabolite. Can also perform the reverse reaction in vitro, and has minor activity against 2SC and other small molecule thiols. The chain is N-acetyl-S-(2-succino)cysteine lyase from Enterococcus italicus (strain DSM 15952 / CCUG 50447 / LMG 22039 / TP 1.5).